A 303-amino-acid chain; its full sequence is Caspase-7 (303 aa).

M1 is modified (N-acetylmethionine). The propeptide occupies 1–23; that stretch reads MTDDQDCAAELEKVDSSSEDGVD. A disordered region spans residues 1-26; the sequence is MTDDQDCAAELEKVDSSSEDGVDAKP. Basic and acidic residues predominate over residues 10–26; sequence ELEKVDSSSEDGVDAKP. A Phosphoserine modification is found at S30. An exosite region spans residues 38–41; sequence KKKR. Residues 76 to 87 are loop L1; that stretch reads KNFDKATGMDVR. The active site involves H144. T173 is subject to Phosphothreonine. Residue C186 is part of the active site. A loop L2 region spans residues 187–196; the sequence is RGTELDDGIQ. Positions 199-206 are excised as a propeptide; that stretch reads SGPINDID. Positions 226 to 238 are loop L3; it reads VPGYYSWRNPGKG. The residue at position 239 (S239) is a Phosphoserine. A loop L4 region spans residues 274-288; it reads ESQSDDPRFNEKKQI.

This sequence belongs to the peptidase C14A family. As to quaternary structure, heterotetramer that consists of two anti-parallel arranged heterodimers, each one formed by a 20 kDa (p20) and a 11 kDa (p11) subunit. Interacts with XIAP (via its second BIR domain); inhibiting CASP7 activity. Interacts with BIRC6/bruce. Interacts with ATXN3 (short isoform 1). Interacts with HSPA5. Post-translationally, cleavage by different proteases, such as granzyme B (GZMB), caspase-1 (CASP1), caspase-8 (CASP8) or caspase-9 (CASP9) generate the two active subunits. Its involvement in different programmed cell death processes is probably specified by the protease that activates CASP7. Cleaved and activated by initiator caspases (CASP8 and/or CASP9), leading to execution phase of apoptosis. Cleavage and maturation by GZMB regulates granzyme-mediated programmed cell death. Cleaved and activated by CASP1 in response to bacterial infection. Propeptide domains can also be cleaved efficiently by CASP3. Active heterodimers between the small subunit of caspase-7 and the large subunit of CASP3, and vice versa, also occur. Also cleaved at the N-terminus at alternative sites by CAPN1, leading to its activation. In terms of processing, phosphorylation at Ser-30 and Ser-239 by PAK2 inhibits its activity. Phosphorylation at Ser-30 prevents cleavage and activation by initiator caspase CASP9, while phosphorylation at Ser-239 prevents thiol protease activity by preventing substrate-binding. Ubiquitinated by BIRC6; this activity is inhibited by DIABLO/SMAC. As to expression, highly expressed in heart, lung, liver and kidney. Low levels in spleen, skeletal muscle and testis. No expression in the brain.

The protein resides in the cytoplasm. It is found in the cytosol. It localises to the nucleus. The protein localises to the secreted. Its subcellular location is the extracellular space. The catalysed reaction is Strict requirement for an Asp residue at position P1 and has a preferred cleavage sequence of Asp-Glu-Val-Asp-|-.. Its activity is regulated as follows. During activation, the N-terminal disordered prodomain is removed by cleavage. Concomitantly, double cleavage gives rise to a large Caspase-7 subunit p20 and a small Caspase-7 subunit p11. The two large and two small subunits then assemble to form the active CASP7 complex. Can be cleaved and activated by different caspases, depending on the context. Cleaved and activated by initiator caspases (CASP8 and/or CASP9), leading to execution phase of apoptosis. Cleavage and maturation by GZMB regulates granzyme-mediated programmed cell death. Cleavage and maturation by CASP1 regulates pyroptosis. Inhibited by XIAP, which directly binds to the active site pocket and obstructs substrate entry. Phosphorylation at Ser-30 and Ser-239 by PAK2 inhibits its activity. Inhibited by BIRC6; following inhibition of BIRC6-caspase binding by DIABLO/SMAC, BIRC6 is subjected to caspase cleavage, leading to an increase in active caspases. Its function is as follows. Thiol protease involved in different programmed cell death processes, such as apoptosis, pyroptosis or granzyme-mediated programmed cell death, by proteolytically cleaving target proteins. Has a marked preference for Asp-Glu-Val-Asp (DEVD) consensus sequences, with some plasticity for alternate non-canonical sequences. Its involvement in the different programmed cell death processes is probably determined by upstream proteases that activate CASP7. Acts as an effector caspase involved in the execution phase of apoptosis: following cleavage and activation by initiator caspases (CASP8 and/or CASP9), mediates execution of apoptosis by catalyzing cleavage of proteins, such as CLSPN, PARP1, PTGES3 and YY1. Compared to CASP3, acts as a minor executioner caspase and cleaves a limited set of target proteins. Acts as a key regulator of the inflammatory response in response to bacterial infection by catalyzing cleavage and activation of the sphingomyelin phosphodiesterase SMPD1 in the extracellular milieu, thereby promoting membrane repair. Regulates pyroptosis in intestinal epithelial cells: cleaved and activated by CASP1 in response to S.typhimurium infection, promoting its secretion to the extracellular milieu, where it catalyzes activation of SMPD1, generating ceramides that repair membranes and counteract the action of gasdermin-D (GSDMD) pores. Regulates granzyme-mediated programmed cell death in hepatocytes: cleaved and activated by granzyme B (GZMB) in response to bacterial infection, promoting its secretion to the extracellular milieu, where it catalyzes activation of SMPD1, generating ceramides that repair membranes and counteract the action of perforin (PRF1) pores. Following cleavage by CASP1 in response to inflammasome activation, catalyzes processing and inactivation of PARP1, alleviating the transcription repressor activity of PARP1. Acts as an inhibitor of type I interferon production during virus-induced apoptosis by mediating cleavage of antiviral proteins CGAS, IRF3 and MAVS, thereby preventing cytokine overproduction. Cleaves and activates sterol regulatory element binding proteins (SREBPs). Cleaves phospholipid scramblase proteins XKR4, XKR8 and XKR9. Cleaves BIRC6 following inhibition of BIRC6-caspase binding by DIABLO/SMAC. In Mus musculus (Mouse), this protein is Caspase-7.